We begin with the raw amino-acid sequence, 166 residues long: Endoribonuclease YbeY (166 aa).

Zn(2+) contacts are provided by His132, His136, and His142.

It belongs to the endoribonuclease YbeY family. Zn(2+) is required as a cofactor.

The protein resides in the cytoplasm. In terms of biological role, single strand-specific metallo-endoribonuclease involved in late-stage 70S ribosome quality control and in maturation of the 3' terminus of the 16S rRNA. The sequence is that of Endoribonuclease YbeY from Clostridium botulinum (strain Loch Maree / Type A3).